The chain runs to 356 residues: Aminodeoxyfutalosine deaminase (356 aa).

The Zn(2+) site is built by histidine 18 and histidine 20. Residues arginine 73, glutamate 140, and glycine 172 each contribute to the substrate site. A Zn(2+)-binding site is contributed by histidine 199. Glutamate 202 serves as the catalytic Proton donor. Position 287 (aspartate 287) interacts with Zn(2+).

This sequence belongs to the metallo-dependent hydrolases superfamily. Adenosine and AMP deaminases family. Zn(2+) serves as cofactor.

It catalyses the reaction 6-amino-6-deoxyfutalosine + H2O + H(+) = futalosine + NH4(+). Its pathway is quinol/quinone metabolism; menaquinone biosynthesis. Catalyzes the deamination of aminodeoxyfutalosine (AFL) into futalosine (FL), a step in the biosynthesis of menaquinone (MK, vitamin K2). Is very poorly efficient on 1-(6-amino-9H-purin-9-yl)-1-deoxy-N-ethyl-beta-D-ribofuranuronamide (NECA), adenosine, 5'-methylthioadenosine, 5'-deoxyadenosine, 2'-deoxyadenosine, and AMP as substrate. The chain is Aminodeoxyfutalosine deaminase from Acidothermus cellulolyticus (strain ATCC 43068 / DSM 8971 / 11B).